An 865-amino-acid chain; its full sequence is Alanine--tRNA ligase (865 aa).

His-554, His-558, Cys-656, and His-660 together coordinate Zn(2+).

Belongs to the class-II aminoacyl-tRNA synthetase family. Zn(2+) serves as cofactor.

It localises to the cytoplasm. It carries out the reaction tRNA(Ala) + L-alanine + ATP = L-alanyl-tRNA(Ala) + AMP + diphosphate. In terms of biological role, catalyzes the attachment of alanine to tRNA(Ala) in a two-step reaction: alanine is first activated by ATP to form Ala-AMP and then transferred to the acceptor end of tRNA(Ala). Also edits incorrectly charged Ser-tRNA(Ala) and Gly-tRNA(Ala) via its editing domain. The chain is Alanine--tRNA ligase from Francisella tularensis subsp. mediasiatica (strain FSC147).